The primary structure comprises 98 residues: NADH-ubiquinone oxidoreductase chain 4L (98 aa).

The next 3 helical transmembrane spans lie at P2 to F22, S29 to L49, and I61 to V81.

This sequence belongs to the complex I subunit 4L family. Core subunit of respiratory chain NADH dehydrogenase (Complex I) which is composed of 45 different subunits.

The protein localises to the mitochondrion inner membrane. It catalyses the reaction a ubiquinone + NADH + 5 H(+)(in) = a ubiquinol + NAD(+) + 4 H(+)(out). Its function is as follows. Core subunit of the mitochondrial membrane respiratory chain NADH dehydrogenase (Complex I) which catalyzes electron transfer from NADH through the respiratory chain, using ubiquinone as an electron acceptor. Part of the enzyme membrane arm which is embedded in the lipid bilayer and involved in proton translocation. The chain is NADH-ubiquinone oxidoreductase chain 4L (MT-ND4L) from Propithecus tattersalli (Golden-crowned Sifaka).